The chain runs to 196 residues: ECF RNA polymerase sigma factor SigM (196 aa).

A sigma-70 factor domain-2 region spans residues 39–105 (LFRRHHRQLH…ACLDRLRRAK (67 aa)). The Polymerase core binding signature appears at 63-66 (DALQ). The sigma-70 factor domain-4 stretch occupies residues 130–181 (AVQRALMRLPVEQRAAVVAVDMQGYSIADTARMLGVAEGTVKSRCARARARL). Residues 156-175 (IADTARMLGVAEGTVKSRCA) constitute a DNA-binding region (H-T-H motif).

This sequence belongs to the sigma-70 factor family. ECF subfamily. As to quaternary structure, interacts transiently with the RNA polymerase catalytic core formed by RpoA, RpoB, RpoC and RpoZ (2 alpha, 1 beta, 1 beta' and 1 omega subunit) to form the RNA polymerase holoenzyme that can initiate transcription. Interacts (via sigma-70 factor domain-4) with anti-sigma-M factor RsmA (AC L7N5D7).

Functionally, sigma factors are initiation factors that promote the attachment of RNA polymerase to specific initiation sites and are then released. Extracytoplasmic function (ECF) sigma factors are held in an inactive form by an anti-sigma factor (RsaM, AC L7N5D7) until released by regulated intramembrane proteolysis. This sigma factor is required for the synthesis of surface or secreted molecules. This is ECF RNA polymerase sigma factor SigM (sigM) from Mycobacterium tuberculosis (strain ATCC 25618 / H37Rv).